The primary structure comprises 131 residues: Ribonuclease VapC30 (131 aa).

A PINc domain is found at 1–129; sequence MVIDTSALVA…FQHTDIATVA (129 aa). 2 residues coordinate Mg(2+): D4 and D99.

The protein belongs to the PINc/VapC protein family. Mg(2+) is required as a cofactor.

In terms of biological role, toxic component of a type II toxin-antitoxin (TA) system. An RNase. Its toxic effect is neutralized by coexpression with cognate antitoxin VapB30. The protein is Ribonuclease VapC30 of Mycobacterium tuberculosis (strain CDC 1551 / Oshkosh).